We begin with the raw amino-acid sequence, 189 residues long: Peptidyl-tRNA hydrolase (189 aa).

Position 15 (tyrosine 15) interacts with tRNA. Histidine 20 serves as the catalytic Proton acceptor. TRNA-binding residues include tyrosine 65, asparagine 67, and asparagine 113.

Belongs to the PTH family. In terms of assembly, monomer.

Its subcellular location is the cytoplasm. The catalysed reaction is an N-acyl-L-alpha-aminoacyl-tRNA + H2O = an N-acyl-L-amino acid + a tRNA + H(+). Hydrolyzes ribosome-free peptidyl-tRNAs (with 1 or more amino acids incorporated), which drop off the ribosome during protein synthesis, or as a result of ribosome stalling. In terms of biological role, catalyzes the release of premature peptidyl moieties from peptidyl-tRNA molecules trapped in stalled 50S ribosomal subunits, and thus maintains levels of free tRNAs and 50S ribosomes. The protein is Peptidyl-tRNA hydrolase of Caldicellulosiruptor saccharolyticus (strain ATCC 43494 / DSM 8903 / Tp8T 6331).